Here is a 251-residue protein sequence, read N- to C-terminus: Flagellar basal-body rod protein FlgF (251 aa).

This sequence belongs to the flagella basal body rod proteins family. The basal body constitutes a major portion of the flagellar organelle and consists of five rings (E,L,P,S, and M) mounted on a central rod. The rod consists of about 26 subunits of FlgG in the distal portion, and FlgB, FlgC and FlgF are thought to build up the proximal portion of the rod with about 6 subunits each.

Its subcellular location is the bacterial flagellum basal body. This Salmonella typhimurium (strain LT2 / SGSC1412 / ATCC 700720) protein is Flagellar basal-body rod protein FlgF (flgF).